Consider the following 242-residue polypeptide: tRNA (guanine-N(1)-)-methyltransferase (242 aa).

S-adenosyl-L-methionine contacts are provided by residues Gly-109 and 129–134; that span reads LGDFVL.

It belongs to the RNA methyltransferase TrmD family. Homodimer.

It localises to the cytoplasm. It carries out the reaction guanosine(37) in tRNA + S-adenosyl-L-methionine = N(1)-methylguanosine(37) in tRNA + S-adenosyl-L-homocysteine + H(+). In terms of biological role, specifically methylates guanosine-37 in various tRNAs. This Exiguobacterium sibiricum (strain DSM 17290 / CCUG 55495 / CIP 109462 / JCM 13490 / 255-15) protein is tRNA (guanine-N(1)-)-methyltransferase.